We begin with the raw amino-acid sequence, 474 residues long: uncharacterized protein (474 aa).

The segment covering 1 to 11 (MGGSDFEDDEL) has biased composition (acidic residues). The interval 1–163 (MGGSDFEDDE…ETSPFNREDG (163 aa)) is disordered. The segment covering 12-25 (FKDLYGEENEKKVE) has biased composition (basic and acidic residues). The span at 27–39 (ASGNQETSNVTPT) shows a compositional bias: polar residues. Basic and acidic residues predominate over residues 40 to 76 (KENEGYEELEKSGEAGAERTKENPFREEPGADFDRSG). Over residues 129–140 (NDNYNENQSALT) the composition is skewed to polar residues. RRM domains follow at residues 163–245 (GKMF…EQEK) and 247–324 (AKMF…RATP). Residues 412 to 474 (DPSKMNQGTG…GGHSFHPYRR (63 aa)) are disordered. The span at 425 to 434 (PFSPSMPSGS) shows a compositional bias: low complexity. Positions 435–444 (SRGGYHGRNP) are enriched in gly residues.

The protein localises to the nucleus. This is an uncharacterized protein from Schizosaccharomyces pombe (strain 972 / ATCC 24843) (Fission yeast).